The following is a 266-amino-acid chain: Hydroxyethylthiazole kinase (266 aa).

Substrate is bound at residue methionine 46. ATP contacts are provided by arginine 122 and serine 168. Glycine 195 is a substrate binding site.

Belongs to the Thz kinase family. Requires Mg(2+) as cofactor.

The catalysed reaction is 5-(2-hydroxyethyl)-4-methylthiazole + ATP = 4-methyl-5-(2-phosphooxyethyl)-thiazole + ADP + H(+). It functions in the pathway cofactor biosynthesis; thiamine diphosphate biosynthesis; 4-methyl-5-(2-phosphoethyl)-thiazole from 5-(2-hydroxyethyl)-4-methylthiazole: step 1/1. Its function is as follows. Catalyzes the phosphorylation of the hydroxyl group of 4-methyl-5-beta-hydroxyethylthiazole (THZ). The sequence is that of Hydroxyethylthiazole kinase from Oleidesulfovibrio alaskensis (strain ATCC BAA-1058 / DSM 17464 / G20) (Desulfovibrio alaskensis).